Here is a 434-residue protein sequence, read N- to C-terminus: Glutamyl-tRNA reductase (434 aa).

Substrate contacts are provided by residues threonine 49 to arginine 52, serine 109, glutamate 114 to glutamine 116, and glutamine 120. Cysteine 50 (nucleophile) is an active-site residue. Position 189–194 (glycine 189–cysteine 194) interacts with NADP(+).

The protein belongs to the glutamyl-tRNA reductase family. As to quaternary structure, homodimer.

It carries out the reaction (S)-4-amino-5-oxopentanoate + tRNA(Glu) + NADP(+) = L-glutamyl-tRNA(Glu) + NADPH + H(+). It participates in porphyrin-containing compound metabolism; protoporphyrin-IX biosynthesis; 5-aminolevulinate from L-glutamyl-tRNA(Glu): step 1/2. In terms of biological role, catalyzes the NADPH-dependent reduction of glutamyl-tRNA(Glu) to glutamate 1-semialdehyde (GSA). This chain is Glutamyl-tRNA reductase, found in Citrifermentans bemidjiense (strain ATCC BAA-1014 / DSM 16622 / JCM 12645 / Bem) (Geobacter bemidjiensis).